We begin with the raw amino-acid sequence, 664 residues long: Armadillo repeat protein involved in nucleocytoplasmic transport Syo2 (664 aa).

Residues 77–119 (GLVSKLIDRISDDSVEVVVEATGALRNLAIEEGYSICMDMYRK) form an ARM repeat.

It belongs to the nuclear import and ribosome assembly adapter family. In terms of assembly, forms a heterotrimeric complex with rpl5 and rpl11a or rpl11b; interaction of this complex with kap104 allows the nuclear import of the heterotrimer. Component of a hexameric 5S RNP precursor complex; this complex acts as a precursor for ribosome assembly.

The protein resides in the cytoplasm. It is found in the nucleus. Functionally, nuclear import adapter that specifically recruits the two functionally and topologically linked ribosomal proteins rpl5 and rpl11 (encoded by rpl11a and rpl11b). Guarantees that this cargo pair remains bound together from the time of synthesis in the cytoplasm until delivery to the nascent 5S rRNA in the nucleus. The polypeptide is Armadillo repeat protein involved in nucleocytoplasmic transport Syo2 (Schizosaccharomyces pombe (strain 972 / ATCC 24843) (Fission yeast)).